A 288-amino-acid chain; its full sequence is MIRQWPSPAKLNLFLYITGQREDGYHLLQTLFQFLDYGDTLTIDVRQDDAIHLLTPVAGVPDEQNLIVRAARLLQQHCDRHGLNTAPRGAEISIEKRLPMGGGLGGGSSNAATVLVALNDLWRCGLSDEQLAELGLALGADVPVFVRGHAAFAEGIGERLQPANPQEKWYLVAHPGVSIPTPVIFGDADLKRDTPVRPLNVLLQATYANDCEPIARKRFREVEQLVSWLLEYAPSRLTGTGACVFAEFDTETAARQVLNQAPEWIRGFVARGVNVSPLHRIRSGQIEP.

K10 is a catalytic residue. Position 99-109 (99-109 (PMGGGLGGGSS)) interacts with ATP. D141 is a catalytic residue.

The protein belongs to the GHMP kinase family. IspE subfamily. As to quaternary structure, homodimer.

The enzyme catalyses 4-CDP-2-C-methyl-D-erythritol + ATP = 4-CDP-2-C-methyl-D-erythritol 2-phosphate + ADP + H(+). The protein operates within isoprenoid biosynthesis; isopentenyl diphosphate biosynthesis via DXP pathway; isopentenyl diphosphate from 1-deoxy-D-xylulose 5-phosphate: step 3/6. Its function is as follows. Catalyzes the phosphorylation of the position 2 hydroxy group of 4-diphosphocytidyl-2C-methyl-D-erythritol. This is 4-diphosphocytidyl-2-C-methyl-D-erythritol kinase from Serratia proteamaculans (strain 568).